Here is a 249-residue protein sequence, read N- to C-terminus: 2,5-diamino-6-ribosylamino-4(3H)-pyrimidinone 5'-phosphate reductase (249 aa).

NADP(+) is bound by residues Thr79, Asp83, Met164, and 187–191; that span reads GGIVI.

This sequence belongs to the HTP reductase family. In terms of assembly, homodimer.

The enzyme catalyses 2,5-diamino-6-(1-D-ribitylamino)pyrimidin-4(3H)-one 5'-phosphate + NADP(+) = 2,5-diamino-6-(1-D-ribosylamino)pyrimidin-4(3H)-one 5'-phosphate + NADPH + H(+). The catalysed reaction is 2,5-diamino-6-(1-D-ribitylamino)pyrimidin-4(3H)-one 5'-phosphate + NAD(+) = 2,5-diamino-6-(1-D-ribosylamino)pyrimidin-4(3H)-one 5'-phosphate + NADH + H(+). It functions in the pathway cofactor biosynthesis; riboflavin biosynthesis. Functionally, catalyzes an early step in riboflavin biosynthesis, the NADPH-dependent reduction of the ribose side chain of 2,5-diamino-6-ribosylamino-4(3H)-pyrimidinone 5'-phosphate, yielding 2,5-diamino-6-ribitylamino-4(3H)-pyrimidinone 5'-phosphate. The protein is 2,5-diamino-6-ribosylamino-4(3H)-pyrimidinone 5'-phosphate reductase (RIB7) of Kluyveromyces marxianus (Yeast).